A 306-amino-acid polypeptide reads, in one-letter code: D-alanine--D-alanine ligase (306 aa).

The 196-residue stretch at lysine 105–glutamate 300 folds into the ATP-grasp domain. Position 131-186 (threonine 131–threonine 186) interacts with ATP. Mg(2+) contacts are provided by aspartate 254, glutamate 267, and asparagine 269.

Belongs to the D-alanine--D-alanine ligase family. Mg(2+) is required as a cofactor. It depends on Mn(2+) as a cofactor.

The protein localises to the cytoplasm. It carries out the reaction 2 D-alanine + ATP = D-alanyl-D-alanine + ADP + phosphate + H(+). It functions in the pathway cell wall biogenesis; peptidoglycan biosynthesis. Cell wall formation. The polypeptide is D-alanine--D-alanine ligase (Nitrosomonas eutropha (strain DSM 101675 / C91 / Nm57)).